Here is a 237-residue protein sequence, read N- to C-terminus: ADTIVAVELDSYPNTDIGDPNYPHIGIDIKSIRSKSTARWNMQTGKVGTVHISYNSVAKRLSAVVSYSGSSSTTVSYDVDLNNVLPEWVRVGLSATTGLYKETNTILSWSFTSKLKTNSIADENSLHFSFHKFSQNPKDLILQGDAFTDSDGNLELTKVSNSGDPQGNSVGRALFYAPVHIWEKSAVVASFDATFTFLIKSPDREPADGITFFIANTDTSIPSGSGGRLLGLFPDAN.

Residues E8 and D10 each contribute to the Mn(2+) site. D10, Y12, N14, and D19 together coordinate Ca(2+). A carbohydrate is bound at residue Y12. Mn(2+) contacts are provided by D19 and H24. Residue 99 to 100 coordinates a carbohydrate; sequence LY. D208 provides a ligand contact to Ca(2+). Residue R228 coordinates a carbohydrate.

It belongs to the leguminous lectin family. In terms of assembly, homotetramer. The beta and gamma chains are produced by partial proteolytic processing of the lectin alpha chain by an asparaginyl endopeptidase.

It localises to the vacuole. Its subcellular location is the aleurone grain. Its function is as follows. D-mannose/D-glucose-binding lectin with hemagglutinating activity towards rabbit and human erythrocytes. In rats, elicits an acute inflammatory response by inducing neutrophil migration and induces dose-dependent paw edema. This is Lectin alpha chain from Macropsychanthus wilsonii (Wilson's clusterpea).